Here is a 124-residue protein sequence, read N- to C-terminus: Cholera enterotoxin subunit B (124 aa).

A signal peptide spans 1–21; sequence MIKLKFGVFFTVLLSSAYAHG. A disulfide bond links Cys-30 and Cys-107.

The holotoxin (choleragen) consists of a pentameric ring of B subunits whose central pore is occupied by the A subunit. The A subunit contains two chains, A1 and A2, linked by a disulfide bridge.

Its subcellular location is the secreted. It localises to the host cell membrane. The B subunit pentameric ring directs the A subunit to its target by binding to the GM1 gangliosides present on the surface of the intestinal epithelial cells. It can bind five GM1 gangliosides. It has no toxic activity by itself. The chain is Cholera enterotoxin subunit B (ctxB) from Vibrio cholerae serotype O1 (strain ATCC 39315 / El Tor Inaba N16961).